The following is a 420-amino-acid chain: Transcription factor IIIB 50 kDa subunit (420 aa).

Residues 3–36 (NGSRCPDCGSSELVEDSHYSQSQLVCSDCGCVVT) form a TFIIB-type zinc finger. Cysteine 7, cysteine 10, cysteine 28, and cysteine 31 together coordinate Zn(2+). A run of 2 repeats spans residues 72–157 (DLRR…MQMV) and 173–249 (VKSY…SLAQ). An interaction with target DNA region spans residues 108 to 114 (AARLQKK). The segment at 316-387 (TAEVETQQQQ…AVTGDEDISD (72 aa)) is disordered. Residues 322–336 (QQQQQQQQGQGQGQQ) show a composition bias toward low complexity. Serine 354 is modified (phosphoserine). The required for the formation of a ternary complex with DNA and TBP; not required for interaction with TBP in the absence of DNA stretch occupies residues 358–364 (LLPPCML). The residue at position 362 (cysteine 362) is a Cysteine sulfenic acid (-SOH). The required for interaction with TBP and formation of a ternary complex with DNA and TBP stretch occupies residues 366 to 420 (PPKRTHTLPPESAVTGDEDISDSEIEQYLRTPQEVRDFERAQAASQAAMRVPNPP).

Belongs to the TFIIB family. In terms of assembly, component of TFIIIB complexes. The TFIIIB complex has two activities, alpha and beta. The TFIIIB-alpha activity complex is composed of TBP, BDP1, and a complex containing both BRF2 and at least four stably associated proteins; this complex inhibits the transcription by pol III via its phosphorylation by CK2; YY1 facilitates the TFIIIB-alpha complex formation. Interacts with TBP; this interaction promotes recruitment of BRF2 to TATA box-containing promoters. Interacts with TBP and the BURE sequence (GC-rich sequence downstream from the TATA box) to form a strong ternary complex which is joined by BDP1; this ternary complex stimulates pol III transcription. Forms a trimeric complex composed of TBP, BRF2 and mini-SNAPc complex (SNAP43, SNAP50, and the N-terminal third of SNAP190) on the promoter. Assembly of the TBP-BRF2 complex is stimulated by SNAP190. Interacts with MAF1 and SNAPC4. In terms of processing, in response to oxidative stress, Cys-362 is reversibly oxidized to cysteine sulfenic acid. Oxidation of Cys-362 impairs formation of a ternary complex with TBP and DNA and down-regulates expression of target genes in response to oxidative stress.

The protein localises to the nucleus. Functionally, general activator of RNA polymerase III transcription. Factor exclusively required for RNA polymerase III transcription of genes with promoter elements upstream of the initiation sites. Contributes to the regulation of gene expression; functions as activator in the absence of oxidative stress. Down-regulates expression of target genes in response to oxidative stress. Overexpression protects cells against apoptosis in response to oxidative stress. The polypeptide is Transcription factor IIIB 50 kDa subunit (Brf2) (Mus musculus (Mouse)).